The primary structure comprises 295 residues: Autophagy-related protein 37 (295 aa).

The region spanning 5–103 is the ACB domain; the sequence is VDRVFVHALN…LIDTMHRYAT (99 aa). 2 disordered regions span residues 124–162 and 174–201; these read NSPS…PLKE and LRSQ…RWQR. Low complexity predominate over residues 125–153; it reads SPSSSLSSPRPNQSTGAGAQQPQQEPEQA. Asn-136 carries an N-linked (GlcNAc...) asparagine glycan. A helical membrane pass occupies residues 244–264; the sequence is WLLVKHIFADLVILSVVLLWL.

Belongs to the ATG37 family.

The protein resides in the peroxisome membrane. Acyl-CoA binding protein which acts as the peroxisome receptor for pexophagy. Required for both micropexophagy and macropexophagy, but not for the cytoplasm to vacuole transport (Cvt) or autophagy pathways. Required for functional micropexophagic apparatus (MIPA) and relocation of ATG11 to the peroxisome-sequestering arms of the vacuole. Binds palmitoyl-CoA but not oleyl-CoA. In Gibberella zeae (strain ATCC MYA-4620 / CBS 123657 / FGSC 9075 / NRRL 31084 / PH-1) (Wheat head blight fungus), this protein is Autophagy-related protein 37.